Consider the following 1124-residue polypeptide: uncharacterized protein (1124 aa).

A signal peptide spans 1 to 28 (MALFPRSILIALVLSFVLNLGLVTKIHA). Transmembrane regions (helical) follow at residues 332-352 (IVTAFLTLYVMFFGFKLLLAG), 359-379 (EYINFILKIIFVTYFSIGINI), 393-413 (MIQWAFPFLLNGINGLASWVM), 495-515 (MLVSLALSYPLLVISVAAFMV), 522-542 (MISIVILGILAPLFVPMFLFA), 555-575 (MISFLLQPMVVVTFMITMFAV), and 700-720 (IKNILLALVTACFTLYLMYNF).

It belongs to the TrbL/VirB6 family.

It is found in the cell membrane. This is an uncharacterized protein from Rickettsia prowazekii (strain Madrid E).